Reading from the N-terminus, the 295-residue chain is Ribosome production factor 1 (295 aa).

Positions 24-47 (HEKNKERHTMRRKRAKEERENPEL) are disordered. Over residues 38–47 (AKEERENPEL) the composition is skewed to basic and acidic residues. The 184-residue stretch at 93–276 (PKIFLTTNVN…LKRLQRGIKE (184 aa)) folds into the Brix domain. The RNA-binding stretch occupies residues 254-271 (VGLQELGPQFTLKLKRLQ).

As to quaternary structure, part of a complex that includes BRX1, RPF1, RPF2 and SSF1 or SSF2.

It is found in the nucleus. It localises to the nucleolus. Essential protein. Required for biogenesis of the 60S ribosomal subunit. This is Ribosome production factor 1 (RPF1) from Saccharomyces cerevisiae (strain ATCC 204508 / S288c) (Baker's yeast).